Here is a 413-residue protein sequence, read N- to C-terminus: Arginine biosynthesis bifunctional protein ArgJ (413 aa).

Substrate contacts are provided by Thr-160, Lys-186, Thr-197, Glu-284, Asn-408, and Ser-413. Thr-197 serves as the catalytic Nucleophile.

Belongs to the ArgJ family. In terms of assembly, heterotetramer of two alpha and two beta chains.

The protein resides in the cytoplasm. The enzyme catalyses N(2)-acetyl-L-ornithine + L-glutamate = N-acetyl-L-glutamate + L-ornithine. It carries out the reaction L-glutamate + acetyl-CoA = N-acetyl-L-glutamate + CoA + H(+). It participates in amino-acid biosynthesis; L-arginine biosynthesis; L-ornithine and N-acetyl-L-glutamate from L-glutamate and N(2)-acetyl-L-ornithine (cyclic): step 1/1. Its pathway is amino-acid biosynthesis; L-arginine biosynthesis; N(2)-acetyl-L-ornithine from L-glutamate: step 1/4. Functionally, catalyzes two activities which are involved in the cyclic version of arginine biosynthesis: the synthesis of N-acetylglutamate from glutamate and acetyl-CoA as the acetyl donor, and of ornithine by transacetylation between N(2)-acetylornithine and glutamate. The protein is Arginine biosynthesis bifunctional protein ArgJ of Burkholderia pseudomallei (strain 1710b).